The sequence spans 280 residues: 4-diphosphocytidyl-2-C-methyl-D-erythritol kinase (280 aa).

Lys-11 is a catalytic residue. Position 95-105 (95-105) interacts with ATP; that stretch reads PVAAGLGGGSS. The active site involves Asp-137.

Belongs to the GHMP kinase family. IspE subfamily.

It catalyses the reaction 4-CDP-2-C-methyl-D-erythritol + ATP = 4-CDP-2-C-methyl-D-erythritol 2-phosphate + ADP + H(+). Its pathway is isoprenoid biosynthesis; isopentenyl diphosphate biosynthesis via DXP pathway; isopentenyl diphosphate from 1-deoxy-D-xylulose 5-phosphate: step 3/6. Catalyzes the phosphorylation of the position 2 hydroxy group of 4-diphosphocytidyl-2C-methyl-D-erythritol. In Pelobacter propionicus (strain DSM 2379 / NBRC 103807 / OttBd1), this protein is 4-diphosphocytidyl-2-C-methyl-D-erythritol kinase.